An 88-amino-acid polypeptide reads, in one-letter code: Auxin-responsive protein SAUR21 (88 aa).

It belongs to the ARG7 family.

The protein localises to the cell membrane. Its function is as follows. Functions as a positive effector of cell expansion through modulation of auxin transport. This is Auxin-responsive protein SAUR21 from Arabidopsis thaliana (Mouse-ear cress).